The sequence spans 669 residues: Gametogenetin-binding protein 2 (669 aa).

Disordered regions lie at residues 375–421 and 452–475; these read QEKK…GNPC and PHSNVSDCGYSSSLEGSEPGSQEG. A compositionally biased stretch (basic residues) spans 376-388; the sequence is EKKRQKKNRKKNK. Polar residues predominate over residues 398–408; it reads ETKSANPSQKN.

The protein localises to the cytoplasm. May be involved in spermatogenesis. This is Gametogenetin-binding protein 2 (ggnbp2) from Xenopus tropicalis (Western clawed frog).